A 493-amino-acid polypeptide reads, in one-letter code: Cell division protein FtsA (493 aa).

The interval 434–468 is disordered; that stretch reads AHQSNPTPHIHSSPTERNLSDLKTPSAPLNTAKND. The segment covering 436 to 465 has biased composition (polar residues); it reads QSNPTPHIHSSPTERNLSDLKTPSAPLNTA.

This sequence belongs to the FtsA/MreB family. In terms of assembly, self-interacts. Interacts with FtsZ.

It localises to the cell inner membrane. In terms of biological role, cell division protein that is involved in the assembly of the Z ring. May serve as a membrane anchor for the Z ring. The protein is Cell division protein FtsA of Helicobacter pylori (strain J99 / ATCC 700824) (Campylobacter pylori J99).